The primary structure comprises 434 residues: ATP-dependent protease ATPase subunit HslU (434 aa).

ATP contacts are provided by residues Val-18, Gly-60–Glu-65, Asp-247, Glu-312, and Arg-384.

The protein belongs to the ClpX chaperone family. HslU subfamily. In terms of assembly, a double ring-shaped homohexamer of HslV is capped on each side by a ring-shaped HslU homohexamer. The assembly of the HslU/HslV complex is dependent on binding of ATP.

It is found in the cytoplasm. Its function is as follows. ATPase subunit of a proteasome-like degradation complex; this subunit has chaperone activity. The binding of ATP and its subsequent hydrolysis by HslU are essential for unfolding of protein substrates subsequently hydrolyzed by HslV. HslU recognizes the N-terminal part of its protein substrates and unfolds these before they are guided to HslV for hydrolysis. The chain is ATP-dependent protease ATPase subunit HslU from Bradyrhizobium sp. (strain BTAi1 / ATCC BAA-1182).